A 291-amino-acid chain; its full sequence is Probable L-ascorbate peroxidase 4, peroxisomal (291 aa).

His40 functions as the Proton acceptor in the catalytic mechanism. His160 lines the heme b pocket. K(+) contacts are provided by Thr161, Thr177, and Asp184. A helical transmembrane segment spans residues 263–283 (VLAQSAVGVAVAAAVVIVSYL).

This sequence belongs to the peroxidase family. Ascorbate peroxidase subfamily. Requires heme b as cofactor. As to expression, expressed in leaves, stems and flowers.

The protein resides in the peroxisome membrane. The enzyme catalyses L-ascorbate + H2O2 = L-dehydroascorbate + 2 H2O. Functionally, plays a key role in hydrogen peroxide removal. The polypeptide is Probable L-ascorbate peroxidase 4, peroxisomal (Oryza sativa subsp. japonica (Rice)).